Here is a 517-residue protein sequence, read N- to C-terminus: ATP synthase subunit alpha 2 (517 aa).

173-180 contacts ATP; sequence GDRQTGKT.

This sequence belongs to the ATPase alpha/beta chains family. F-type ATPases have 2 components, CF(1) - the catalytic core - and CF(0) - the membrane proton channel. CF(1) has five subunits: alpha(3), beta(3), gamma(1), delta(1), epsilon(1). CF(0) has three main subunits: a(1), b(2) and c(9-12). The alpha and beta chains form an alternating ring which encloses part of the gamma chain. CF(1) is attached to CF(0) by a central stalk formed by the gamma and epsilon chains, while a peripheral stalk is formed by the delta and b chains.

The protein localises to the cell inner membrane. The catalysed reaction is ATP + H2O + 4 H(+)(in) = ADP + phosphate + 5 H(+)(out). In terms of biological role, produces ATP from ADP in the presence of a proton gradient across the membrane. The alpha chain is a regulatory subunit. The polypeptide is ATP synthase subunit alpha 2 (Legionella pneumophila subsp. pneumophila (strain Philadelphia 1 / ATCC 33152 / DSM 7513)).